Reading from the N-terminus, the 237-residue chain is Large ribosomal subunit protein uL1 (237 aa).

This sequence belongs to the universal ribosomal protein uL1 family. Part of the 50S ribosomal subunit.

Functionally, binds directly to 23S rRNA. The L1 stalk is quite mobile in the ribosome, and is involved in E site tRNA release. Its function is as follows. Protein L1 is also a translational repressor protein, it controls the translation of the L11 operon by binding to its mRNA. The polypeptide is Large ribosomal subunit protein uL1 (Thermosynechococcus vestitus (strain NIES-2133 / IAM M-273 / BP-1)).